Here is a 487-residue protein sequence, read N- to C-terminus: Glutamyl-tRNA(Gln) amidotransferase subunit A (487 aa).

Residues Lys80 and Ser155 each act as charge relay system in the active site. The active-site Acyl-ester intermediate is the Ser179.

Belongs to the amidase family. GatA subfamily. In terms of assembly, heterotrimer of A, B and C subunits.

It carries out the reaction L-glutamyl-tRNA(Gln) + L-glutamine + ATP + H2O = L-glutaminyl-tRNA(Gln) + L-glutamate + ADP + phosphate + H(+). Functionally, allows the formation of correctly charged Gln-tRNA(Gln) through the transamidation of misacylated Glu-tRNA(Gln) in organisms which lack glutaminyl-tRNA synthetase. The reaction takes place in the presence of glutamine and ATP through an activated gamma-phospho-Glu-tRNA(Gln). The protein is Glutamyl-tRNA(Gln) amidotransferase subunit A of Leptospira interrogans serogroup Icterohaemorrhagiae serovar copenhageni (strain Fiocruz L1-130).